A 195-amino-acid polypeptide reads, in one-letter code: Protein GrpE (195 aa).

The span at 1 to 20 (MSSKEQKTPDEQVLDQKEAA) shows a compositional bias: basic and acidic residues. The tract at residues 1 to 40 (MSSKEQKTPDEQVLDQKEAAKGQQADAAPETADVADPRDE) is disordered.

Belongs to the GrpE family. In terms of assembly, homodimer.

The protein resides in the cytoplasm. Its function is as follows. Participates actively in the response to hyperosmotic and heat shock by preventing the aggregation of stress-denatured proteins, in association with DnaK and GrpE. It is the nucleotide exchange factor for DnaK and may function as a thermosensor. Unfolded proteins bind initially to DnaJ; upon interaction with the DnaJ-bound protein, DnaK hydrolyzes its bound ATP, resulting in the formation of a stable complex. GrpE releases ADP from DnaK; ATP binding to DnaK triggers the release of the substrate protein, thus completing the reaction cycle. Several rounds of ATP-dependent interactions between DnaJ, DnaK and GrpE are required for fully efficient folding. The chain is Protein GrpE from Pectobacterium atrosepticum (strain SCRI 1043 / ATCC BAA-672) (Erwinia carotovora subsp. atroseptica).